The primary structure comprises 228 residues: Thermonuclease (228 aa).

Residues 1–23 form the signal peptide; sequence MTEYLLSAGICMAIVSILLIGMA. The propeptide occupies 24–60; the sequence is ISNVSKGQYAKRFFYFATSCLVLTLVVVSSLSSSANA. Polar residues predominate over residues 58–70; it reads ANASQTDNGVNRS. A disordered region spans residues 58 to 83; the sequence is ANASQTDNGVNRSGSEDPTVYSATST. Asp-100 contacts Ca(2+). Arg-114 is a catalytic residue. 2 residues coordinate Ca(2+): Asp-119 and Thr-120. Catalysis depends on residues Glu-122 and Arg-166.

Belongs to the thermonuclease family. Ca(2+) is required as a cofactor.

The protein resides in the secreted. The catalysed reaction is Endonucleolytic cleavage to nucleoside 3'-phosphates and 3'-phosphooligonucleotide end-products.. In terms of biological role, enzyme that catalyzes the hydrolysis of both DNA and RNA at the 5' position of the phosphodiester bond. The protein is Thermonuclease (nuc) of Staphylococcus aureus (strain COL).